A 418-amino-acid chain; its full sequence is MSPDKREFDIVLYGATGFSGKLTAEHLALSESTARIALAGRSSERLRNVRALLGPNAQDWPLIVADASQPSTLEAMAGRAQVVLTTVGPYTRYGLPLVAACARTGTDYADLTGELMFCRNSIDLHHKQAAATGARIILACGFDSVPSDLNVYQLYRRVIEDRTGELCDTDLVLRSFSQRWVSGGSVAAYSEAMLTTSNDPEALRLVTDPYTLTTDRDAEPDLGPQPDFPRHRGSDLAPELAGFWTGGFVQAQFNTRIVRRSNALQNWSYGRQFRYSETMSLGKSWAAPVASAAVTSVVAGAVGLGNKYFNRLPRRVVERVTPKSGTGPSRKTQARGHYTFETYTTTTTGARYMATFAHNVDAYKSTAGLLAASGLTLALDRDRLSELRGVLTPAAAMGEALLTRLPSAGVVIGTTRLS.

It belongs to the saccharopine dehydrogenase family. Enoyl reductase subfamily.

Functionally, involved in the reduction of the double bond between C-4 and C-5 during phthiocerol dimycocerosates (DIM A) and glycosylated phenolphthiocerol dimycocerosates (PGL) biosynthesis. The sequence is that of Trans-acting enoyl reductase from Mycobacterium leprae (strain TN).